The chain runs to 65 residues: Large ribosomal subunit protein bL31 (65 aa).

Cys-16, Cys-18, Cys-36, and Cys-39 together coordinate Zn(2+).

It belongs to the bacterial ribosomal protein bL31 family. Type A subfamily. Part of the 50S ribosomal subunit. Zn(2+) is required as a cofactor.

Binds the 23S rRNA. This is Large ribosomal subunit protein bL31 from Carboxydothermus hydrogenoformans (strain ATCC BAA-161 / DSM 6008 / Z-2901).